Here is a 232-residue protein sequence, read N- to C-terminus: Orotate phosphoribosyltransferase (232 aa).

5-phospho-alpha-D-ribose 1-diphosphate-binding positions include Arg-107, Lys-108, Lys-111, and 133–141 (EDLTTDGGS). Position 137 (Thr-137) interacts with orotate.

It belongs to the purine/pyrimidine phosphoribosyltransferase family. PyrE subfamily. Homodimer. It depends on Mg(2+) as a cofactor.

The catalysed reaction is orotidine 5'-phosphate + diphosphate = orotate + 5-phospho-alpha-D-ribose 1-diphosphate. The protein operates within pyrimidine metabolism; UMP biosynthesis via de novo pathway; UMP from orotate: step 1/2. Its function is as follows. Catalyzes the transfer of a ribosyl phosphate group from 5-phosphoribose 1-diphosphate to orotate, leading to the formation of orotidine monophosphate (OMP). This is Orotate phosphoribosyltransferase from Cereibacter sphaeroides (strain ATCC 17025 / ATH 2.4.3) (Rhodobacter sphaeroides).